We begin with the raw amino-acid sequence, 649 residues long: Acetyl-coenzyme A synthetase (649 aa).

Residues 191 to 194 (RGGR), Thr-312, and Asn-336 each bind CoA. ATP-binding positions include 388 to 390 (GEP), 412 to 417 (DTWWQT), Asp-501, and Arg-516. Ser-524 lines the CoA pocket. Position 527 (Arg-527) interacts with ATP. Residues Val-538, His-540, and Val-543 each coordinate Mg(2+). Residue Arg-585 participates in CoA binding. At Lys-610 the chain carries N6-acetyllysine.

This sequence belongs to the ATP-dependent AMP-binding enzyme family. Requires Mg(2+) as cofactor. Post-translationally, acetylated. Deacetylation by the SIR2-homolog deacetylase activates the enzyme.

It carries out the reaction acetate + ATP + CoA = acetyl-CoA + AMP + diphosphate. Its function is as follows. Catalyzes the conversion of acetate into acetyl-CoA (AcCoA), an essential intermediate at the junction of anabolic and catabolic pathways. AcsA undergoes a two-step reaction. In the first half reaction, AcsA combines acetate with ATP to form acetyl-adenylate (AcAMP) intermediate. In the second half reaction, it can then transfer the acetyl group from AcAMP to the sulfhydryl group of CoA, forming the product AcCoA. In Marinobacter nauticus (strain ATCC 700491 / DSM 11845 / VT8) (Marinobacter aquaeolei), this protein is Acetyl-coenzyme A synthetase.